We begin with the raw amino-acid sequence, 650 residues long: Chaperone protein HtpG (650 aa).

Residues 1–344 (MSKHTHSFQA…SADLPLNVSR (344 aa)) are a; substrate-binding. A b region spans residues 345 to 582 (ELLQESRDVR…DGGMSTQLAR (238 aa)). The c stretch occupies residues 583-650 (LLKQAGQSAP…YVKRVNALLA (68 aa)).

The protein belongs to the heat shock protein 90 family. As to quaternary structure, homodimer.

The protein localises to the cytoplasm. Its function is as follows. Molecular chaperone. Has ATPase activity. The chain is Chaperone protein HtpG from Acidovorax sp. (strain JS42).